The chain runs to 775 residues: Kazrin (775 aa).

Residues Ala-38–Asn-66 form a disordered region. Low complexity predominate over residues Gly-51–Ala-64. The stretch at Ala-74–Lys-256 forms a coiled coil. The tract at residues Arg-174–Thr-333 is interaction with PPL. Positions Gln-290 to Glu-427 are disordered. A phosphoserine mark is found at Ser-352, Ser-367, and Ser-387. Residues Ser-411 to Leu-422 show a composition bias toward polar residues. SAM domains are found at residues Trp-446–Ala-511, Asp-524–Val-588, and Trp-612–Phe-679. 2 disordered regions span residues Arg-688–Leu-715 and Arg-729–Cys-762. A compositionally biased stretch (basic and acidic residues) spans Ser-732–Tyr-742.

The protein belongs to the kazrin family. As to quaternary structure, isoform 2, isoform 3 and isoform 4 interact with PPL N-terminus. In terms of tissue distribution, isoform 2, isoform 3 and isoform 4 are expressed in several cell lines including keratinocytes and bladder and epidermoid carcinoma (at protein level). Isoform 2, isoform 3 and isoform 4 are expressed in hair follicle and interfollicular epidermis (at protein level).

Its subcellular location is the cytoplasm. The protein resides in the cytoskeleton. The protein localises to the cell junction. It is found in the desmosome. It localises to the nucleus. Component of the cornified envelope of keratinocytes. May be involved in the interplay between adherens junctions and desmosomes. The function in the nucleus is not known. The chain is Kazrin from Homo sapiens (Human).